Here is a 260-residue protein sequence, read N- to C-terminus: uncharacterized protein (260 aa).

This is an uncharacterized protein from Bacillus subtilis (strain 168).